Reading from the N-terminus, the 815-residue chain is cGMP-specific 3',5'-cyclic phosphodiesterase delta (815 aa).

Topologically, residues 1 to 56 (MNEYNNDNMEQEKEKKKEEQKYKNIIKKEYFIFPRLYDKNKEIEYNKLRIHNIKEY) are cytoplasmic. A helical membrane pass occupies residues 57–77 (ICIHLTISLFIILIECFVFSF). Residues 78–86 (NLNIKDTTY) lie on the Extracellular side of the membrane. A helical membrane pass occupies residues 87–107 (VEICVVIFSILNCLMHIVVLI). The Cytoplasmic portion of the chain corresponds to 108-120 (KMYFFTSESVYTK). A helical transmembrane segment spans residues 121-141 (GVFIGYIVLNQVFQFLSLYFF). Over 142 to 160 (TKRNEQSKNDIAHLKYYDN) the chain is Extracellular. A helical membrane pass occupies residues 161 to 181 (SFNLYVHFFVDSVFILCLPAL). Residues 182–183 (SF) lie on the Cytoplasmic side of the membrane. The helical transmembrane segment at 184–204 (FLSVLFMMMFLCLNILLINMI) threads the bilayer. Topologically, residues 205–210 (KFNKTN) are extracellular. Residue Asn-207 is glycosylated (N-linked (GlcNAc...) asparagine). A helical membrane pass occupies residues 211 to 231 (YGSDIYHICLLSVVLLMFLIL). Topologically, residues 232 to 815 (RYMMEERNRL…FKEEIKHGKL (584 aa)) are cytoplasmic. A PDEase domain is found at 384–762 (YEVEVLKNIK…QTWRLIEKNI (379 aa)). The active-site Proton donor is His-459. 459–463 (HNANH) serves as a coordination point for 3',5'-cyclic GMP. 4 residues coordinate a divalent metal cation: His-463, His-499, Asp-500, and Asp-616. 3 residues coordinate 3',5'-cyclic GMP: Asp-500, Asp-616, and Gln-715.

It belongs to the cyclic nucleotide phosphodiesterase family. It depends on a divalent metal cation as a cofactor.

It localises to the membrane. It carries out the reaction 3',5'-cyclic GMP + H2O = GMP + H(+). Its pathway is purine metabolism; 3',5'-cyclic GMP degradation; GMP from 3',5'-cyclic GMP: step 1/1. Functionally, specifically hydrolyzes the second messenger cGMP, which is a key regulator of many important physiological processes. Probably by regulating cGMP levels, required for activation of gametogenesis. In Plasmodium falciparum (isolate 3D7), this protein is cGMP-specific 3',5'-cyclic phosphodiesterase delta.